Consider the following 79-residue polypeptide: Submaxillary gland androgen-regulated protein 3B (79 aa).

A signal peptide spans 1-22 (MKSLTWILGLWALAACFTPGES). The tract at residues 19–79 (PGESQRGPRG…GIFPPPPPQP (61 aa)) is disordered. Position 23 is a pyrrolidone carboxylic acid (Q23). The segment covering 28 to 79 (GPYPPGPLAPPQPFGPGFVPPPPPPPYGPGRIPPPPPAPYGPGIFPPPPPQP) has biased composition (pro residues).

This sequence belongs to the PROL1/PROL3 family. Post-translationally, P-A and D1A are probably degradation products of P-B. Secreted into saliva by submaxillary gland. Not expressed in heart, brain, lung, liver, skeletal muscle, Kidney, pancreas or placenta.

It localises to the secreted. The polypeptide is Submaxillary gland androgen-regulated protein 3B (SMR3B) (Homo sapiens (Human)).